We begin with the raw amino-acid sequence, 172 residues long: Ribosome maturation factor RimM (172 aa).

The 75-residue stretch at 96-170 (EENEFYFHEI…KITIEVMEGL (75 aa)) folds into the PRC barrel domain.

Belongs to the RimM family. In terms of assembly, binds ribosomal protein uS19.

Its subcellular location is the cytoplasm. Functionally, an accessory protein needed during the final step in the assembly of 30S ribosomal subunit, possibly for assembly of the head region. Essential for efficient processing of 16S rRNA. May be needed both before and after RbfA during the maturation of 16S rRNA. It has affinity for free ribosomal 30S subunits but not for 70S ribosomes. This chain is Ribosome maturation factor RimM, found in Listeria monocytogenes serotype 4b (strain CLIP80459).